Consider the following 352-residue polypeptide: MKKIVFTGGGSAGHVTPNLAIIPYLQEDNWDISYIGSHQGIEKTIIEKEGIPYYSISSGKLRRYFDLKNIKDPFLVMKGVMDAYVRIRKLKPDVIFSKGGFVSVPVVIGGWLNRVPVLLHESDMTPGLANKIALRFASKIFVTFEEAAKHLPKEKVIYTGSPVREEVLKGNREKGLAFLGFSRKKPVITIMGGSLGAKKINETVRSALPELLKKYQIVHLCGKGNLDESLQNKEGYRQFEYVHGELPDILAVTDFVISRAGSNAIFEFLTLQKPMVLIPLSKFASRGDQILNAESFERQGYASVLYEEDVNVKSLIKYVEELSQNNEKYKTALKKYNGKEAIKTIIQNISEA.

UDP-N-acetyl-alpha-D-glucosamine is bound by residues 11-13, R164, S194, and Q289; that span reads SAG.

It belongs to the glycosyltransferase 28 family. MurG subfamily.

It localises to the cell membrane. The catalysed reaction is di-trans,octa-cis-undecaprenyl diphospho-N-acetyl-alpha-D-muramoyl-L-alanyl-D-glutamyl-meso-2,6-diaminopimeloyl-D-alanyl-D-alanine + UDP-N-acetyl-alpha-D-glucosamine = di-trans,octa-cis-undecaprenyl diphospho-[N-acetyl-alpha-D-glucosaminyl-(1-&gt;4)]-N-acetyl-alpha-D-muramoyl-L-alanyl-D-glutamyl-meso-2,6-diaminopimeloyl-D-alanyl-D-alanine + UDP + H(+). The protein operates within cell wall biogenesis; peptidoglycan biosynthesis. Cell wall formation. Catalyzes the transfer of a GlcNAc subunit on undecaprenyl-pyrophosphoryl-MurNAc-pentapeptide (lipid intermediate I) to form undecaprenyl-pyrophosphoryl-MurNAc-(pentapeptide)GlcNAc (lipid intermediate II). This chain is UDP-N-acetylglucosamine--N-acetylmuramyl-(pentapeptide) pyrophosphoryl-undecaprenol N-acetylglucosamine transferase 2, found in Bacillus cereus (strain ATCC 14579 / DSM 31 / CCUG 7414 / JCM 2152 / NBRC 15305 / NCIMB 9373 / NCTC 2599 / NRRL B-3711).